A 959-amino-acid chain; its full sequence is General transcription factor II-I repeat domain-containing protein 1 (959 aa).

Residues Lys-27 and Lys-94 each participate in a glycyl lysine isopeptide (Lys-Gly) (interchain with G-Cter in SUMO2) cross-link. The span at 96–106 (PEAEHPKKVQR) shows a compositional bias: basic and acidic residues. Residues 96–117 (PEAEHPKKVQRGEGGGRSLPRS) are disordered. A GTF2I-like 1 repeat occupies 119 to 213 (LEHGSDVYLL…LEDGGRDSKA (95 aa)). Glycyl lysine isopeptide (Lys-Gly) (interchain with G-Cter in SUMO2) cross-links involve residues Lys-184, Lys-212, Lys-225, Lys-238, Lys-271, Lys-294, Lys-308, Lys-337, Lys-436, Lys-439, and Lys-443. Residues 230 to 250 (CGLHGQAPKVPPQDLPPTATS) form a disordered region. One copy of the GTF2I-like 2 repeat lies at 342–436 (IKETEDINTL…FDERIFTGNK (95 aa)). Phosphoserine is present on Ser-448. The segment at 468–492 (NARSDKGSMSEDCGPGTSGELGGLR) is disordered. The GTF2I-like 3 repeat unit spans residues 556–650 (DSHGDVIRPL…ELLTEGVKEP (95 aa)). Residues Lys-567, Lys-579, Lys-588, Lys-622, Lys-638, and Lys-648 each participate in a glycyl lysine isopeptide (Lys-Gly) (interchain with G-Cter in SUMO2) cross-link. Ser-654 is modified (phosphoserine). Positions 654–679 (SQGTASSLGFSPPALPPERDSGDPLV) are disordered. Glycyl lysine isopeptide (Lys-Gly) (interchain with G-Cter in SUMO2) cross-links involve residues Pro-669, Pro-670, Asp-680, and Lys-684. Gln-686 is subject to Phosphoserine. 2 GTF2I-like repeats span residues 696–790 (LSRI…KPDE) and 793–887 (ANRL…ICND). Residues Ile-701, Lys-724, Lys-732, Lys-772, Lys-774, Lys-787, Lys-829, Lys-889, and Lys-893 each participate in a glycyl lysine isopeptide (Lys-Gly) (interchain with G-Cter in SUMO2) cross-link. A disordered region spans residues 892 to 927 (AKDSSIPKRKRKRVSEGNSVSSSSSSSSSSSSNPDS). The Nuclear localization signal motif lies at 898–905 (PKRKRKRV). Residues 910-923 (SVSSSSSSSSSSSS) are compositionally biased toward low complexity.

Belongs to the TFII-I family. As to quaternary structure, interacts with the retinoblastoma protein (RB1) via its C-terminus. As to expression, highly expressed in adult skeletal muscle, heart, fibroblast, bone and fetal tissues. Expressed at lower levels in all other tissues tested.

The protein resides in the nucleus. In terms of biological role, may be a transcription regulator involved in cell-cycle progression and skeletal muscle differentiation. May repress GTF2I transcriptional functions, by preventing its nuclear residency, or by inhibiting its transcriptional activation. May contribute to slow-twitch fiber type specificity during myogenesis and in regenerating muscles. Binds troponin I slow-muscle fiber enhancer (USE B1). Binds specifically and with high affinity to the EFG sequences derived from the early enhancer of HOXC8. This chain is General transcription factor II-I repeat domain-containing protein 1 (GTF2IRD1), found in Homo sapiens (Human).